We begin with the raw amino-acid sequence, 273 residues long: 4-hydroxy-tetrahydrodipicolinate reductase (273 aa).

Residues 12–17 and Glu38 contribute to the NAD(+) site; that span reads GAGGRM. An NADP(+)-binding site is contributed by Arg39. Residues 102-104 and 126-129 each bind NAD(+); these read GTT and AANF. His159 serves as the catalytic Proton donor/acceptor. Position 160 (His160) interacts with (S)-2,3,4,5-tetrahydrodipicolinate. Lys163 serves as the catalytic Proton donor. 169–170 contacts (S)-2,3,4,5-tetrahydrodipicolinate; that stretch reads GT.

This sequence belongs to the DapB family. In terms of assembly, homotetramer.

It is found in the cytoplasm. The enzyme catalyses (S)-2,3,4,5-tetrahydrodipicolinate + NAD(+) + H2O = (2S,4S)-4-hydroxy-2,3,4,5-tetrahydrodipicolinate + NADH + H(+). It catalyses the reaction (S)-2,3,4,5-tetrahydrodipicolinate + NADP(+) + H2O = (2S,4S)-4-hydroxy-2,3,4,5-tetrahydrodipicolinate + NADPH + H(+). It functions in the pathway amino-acid biosynthesis; L-lysine biosynthesis via DAP pathway; (S)-tetrahydrodipicolinate from L-aspartate: step 4/4. Its function is as follows. Catalyzes the conversion of 4-hydroxy-tetrahydrodipicolinate (HTPA) to tetrahydrodipicolinate. This Escherichia coli O139:H28 (strain E24377A / ETEC) protein is 4-hydroxy-tetrahydrodipicolinate reductase.